The following is a 445-amino-acid chain: Alkylglycerol monooxygenase (445 aa).

2 consecutive transmembrane segments (helical) span residues 43-63 and 111-131; these read ATPF…ILKG and WDSP…YYWF. Positions 120–249 constitute a Fatty acid hydroxylase domain; that stretch reads AFLGVDFGYY…LIIWDKIFGT (130 aa). The Histidine box-1 motif lies at 132-136; that stretch reads HRMAH. The short motif at 145–149 is the Histidine box-2 element; the sequence is HQTHH. A Histidine box-3 motif is present at residues 221–225; sequence HRVHH. The next 3 membrane-spanning stretches (helical) occupy residues 334-354, 363-383, and 413-433; these read LLKI…EETF, VTLL…GFLL, and VPSL…FWGV.

Belongs to the sterol desaturase family. TMEM195 subfamily. Fe cation serves as cofactor.

The protein resides in the endoplasmic reticulum membrane. The catalysed reaction is 1-O-(1,2-saturated-alkyl)-sn-glycerol + (6R)-L-erythro-5,6,7,8-tetrahydrobiopterin + O2 = a 1-(1-hydroxyalkyl)-sn-glycerol + (6R)-L-erythro-6,7-dihydrobiopterin + H2O. Its function is as follows. Glyceryl-ether monooxygenase that cleaves the O-alkyl bond of ether lipids. Ether lipids are essential components of brain membranes. This Homo sapiens (Human) protein is Alkylglycerol monooxygenase (AGMO).